The sequence spans 174 residues: uncharacterized protein (174 aa).

To E.coli HemX C-terminal region.

This is an uncharacterized protein from Haemophilus influenzae (strain ATCC 51907 / DSM 11121 / KW20 / Rd).